Consider the following 147-residue polypeptide: HTH-type transcriptional regulator MntR (147 aa).

The HTH dtxR-type domain occupies 1–63 (MPTPSMEDYI…YEKYRGFVLT (63 aa)). Mn(2+) is bound by residues aspartate 8, glutamate 11, histidine 77, glutamate 99, glutamate 102, and histidine 103.

This sequence belongs to the DtxR/MntR family. As to quaternary structure, homodimer.

The protein localises to the cytoplasm. With respect to regulation, DNA binding is strongly activated by Mn(2+). Functionally, central regulator of manganese homeostasis. This Oceanobacillus iheyensis (strain DSM 14371 / CIP 107618 / JCM 11309 / KCTC 3954 / HTE831) protein is HTH-type transcriptional regulator MntR.